The sequence spans 267 residues: MRVAALISGGKDSCYNMMRCIAEGHQIVALANLRPDDNQVESDELDSYMYQTVGHHAIDLYAEAMALPLYRRTIRGRSLETGRVYTRCEGDEVEDLYELLKLVKEKEEIEGVSVGAILSDYQRVRVENVCKRLNLQPLAYLWQRNQEDLLREMIASNIEAIIIKVAALGLDPDKHLGKTLGEMEPYLLELSKKYGVHVCGEGGEYETFTLDCPLFKKKIVVDTSEAVIHSADAFAPVAYLRLSGLHLEEKVSSVPGDDETTSYIHNS.

Tyr97 is subject to Phosphotyrosine.

Belongs to the Diphthine--ammonia ligase family.

It catalyses the reaction diphthine-[translation elongation factor 2] + NH4(+) + ATP = diphthamide-[translation elongation factor 2] + AMP + diphosphate + H(+). It participates in protein modification; peptidyl-diphthamide biosynthesis. Amidase that catalyzes the last step of diphthamide biosynthesis using ammonium and ATP. Diphthamide biosynthesis consists in the conversion of an L-histidine residue in the translation elongation factor eEF-2 (EEF2) to diphthamide. The sequence is that of Diphthine--ammonia ligase (Dph6) from Rattus norvegicus (Rat).